A 121-amino-acid chain; its full sequence is Nitrogen fixation nifHD region glnB-like protein 2 (121 aa).

The protein belongs to the P(II) protein family.

Functionally, could be involved in the regulation of nitrogen fixation. The sequence is that of Nitrogen fixation nifHD region glnB-like protein 2 (glnBII) from Methanococcus maripaludis (Methanococcus deltae).